The sequence spans 412 residues: Divalent metal cation transporter MntH (412 aa).

At 1–19 (MTNYRVESSSGRAARKTRL) the chain is on the cytoplasmic side. The chain crosses the membrane as a helical span at residues 20-39 (ALMGPAFIAAIGYIDPGNFA). At 40 to 51 (TNIQAGASFGYQ) the chain is on the periplasmic side. Residues 52–71 (LLWVVVWANLMAMLIQILSA) form a helical membrane-spanning segment. Residues 72–95 (KLGIATGKNLAEQIRDHYPRPVVW) are Cytoplasmic-facing. Residues 96–118 (FYWVQAEIIAMATDLAEFIGAAI) traverse the membrane as a helical segment. Residues 119-125 (GFKLILG) lie on the Periplasmic side of the membrane. The chain crosses the membrane as a helical span at residues 126–145 (VSLLQGAVLTGIATFLILML). Topologically, residues 146 to 155 (QRRGQKPLEK) are cytoplasmic. The helical transmembrane segment at 156–175 (VIGGLLLFVAAAYIVELIFS) threads the bilayer. The Periplasmic segment spans residues 176 to 196 (QPNLAQLGKGMVIPSLPTSEA). The helical transmembrane segment at 197-220 (VFLAAGVLGATIMPHVIYLHSSLT) threads the bilayer. The Cytoplasmic segment spans residues 221–238 (QHLHGGSRQQRYSATKWD). The helical transmembrane segment at 239-258 (VAIAMTIAGFVNLAMMATAA) threads the bilayer. Residues 259 to 276 (AAFHFSGHTGVADLDEAY) are Periplasmic-facing. Residues 277 to 297 (LTLQPLLSHAAATVFGLSLVA) traverse the membrane as a helical segment. The Cytoplasmic portion of the chain corresponds to 298–327 (AGLSSTVVGTLAGQVVMQGFIRFHIPLWVR). A helical membrane pass occupies residues 328 to 344 (RTVTMLPSFIVILMGLD). The Periplasmic portion of the chain corresponds to 345-350 (PTRILV). A helical membrane pass occupies residues 351–370 (MSQVLLSFGIALALVPLLIF). Over 371–387 (TSDSKLMGDLVNSKRVK) the chain is Cytoplasmic. A helical transmembrane segment spans residues 388 to 406 (QTGWVIVVLVVALNIWLLV). The Periplasmic portion of the chain corresponds to 407–412 (GTALGL).

This sequence belongs to the NRAMP family.

It is found in the cell inner membrane. Its function is as follows. H(+)-stimulated, divalent metal cation uptake system. The polypeptide is Divalent metal cation transporter MntH (Escherichia coli O9:H4 (strain HS)).